Consider the following 185-residue polypeptide: Ribosome-recycling factor (185 aa).

This sequence belongs to the RRF family.

It localises to the cytoplasm. Responsible for the release of ribosomes from messenger RNA at the termination of protein biosynthesis. May increase the efficiency of translation by recycling ribosomes from one round of translation to another. In Mycobacterium leprae (strain Br4923), this protein is Ribosome-recycling factor.